Consider the following 184-residue polypeptide: Elongation factor P (184 aa).

This sequence belongs to the elongation factor P family.

It localises to the cytoplasm. It functions in the pathway protein biosynthesis; polypeptide chain elongation. Functionally, involved in peptide bond synthesis. Stimulates efficient translation and peptide-bond synthesis on native or reconstituted 70S ribosomes in vitro. Probably functions indirectly by altering the affinity of the ribosome for aminoacyl-tRNA, thus increasing their reactivity as acceptors for peptidyl transferase. The protein is Elongation factor P of Thermus thermophilus (strain ATCC BAA-163 / DSM 7039 / HB27).